The primary structure comprises 200 residues: Exopolysaccharide production protein PSS (200 aa).

Belongs to the bacterial sugar transferase family.

This is Exopolysaccharide production protein PSS (pss) from Rhizobium leguminosarum bv. phaseoli.